A 354-amino-acid chain; its full sequence is NADH-quinone oxidoreductase subunit H (354 aa).

8 consecutive transmembrane segments (helical) span residues 16–36 (WLAV…PVMI), 90–110 (YLFI…WAVI), 126–146 (VLYV…SGWA), 170–190 (MGFA…TGIV), 197–217 (IWNW…ISGL), 249–269 (VFFL…AIMF), 290–310 (VPGF…FLWF), and 329–349 (VLIP…YFKV).

The protein belongs to the complex I subunit 1 family. NDH-1 is composed of 14 different subunits. Subunits NuoA, H, J, K, L, M, N constitute the membrane sector of the complex.

Its subcellular location is the cell inner membrane. The catalysed reaction is a quinone + NADH + 5 H(+)(in) = a quinol + NAD(+) + 4 H(+)(out). In terms of biological role, NDH-1 shuttles electrons from NADH, via FMN and iron-sulfur (Fe-S) centers, to quinones in the respiratory chain. The immediate electron acceptor for the enzyme in this species is believed to be ubiquinone. Couples the redox reaction to proton translocation (for every two electrons transferred, four hydrogen ions are translocated across the cytoplasmic membrane), and thus conserves the redox energy in a proton gradient. This subunit may bind ubiquinone. The polypeptide is NADH-quinone oxidoreductase subunit H (Hydrogenovibrio crunogenus (strain DSM 25203 / XCL-2) (Thiomicrospira crunogena)).